A 443-amino-acid polypeptide reads, in one-letter code: Xaa-Pro dipeptidase (443 aa).

Mn(2+) contacts are provided by Asp-246, Asp-257, His-339, Glu-384, and Glu-423.

This sequence belongs to the peptidase M24B family. Bacterial-type prolidase subfamily. The cofactor is Mn(2+).

The enzyme catalyses Xaa-L-Pro dipeptide + H2O = an L-alpha-amino acid + L-proline. Splits dipeptides with a prolyl residue in the C-terminal position. The sequence is that of Xaa-Pro dipeptidase from Escherichia coli O8 (strain IAI1).